A 373-amino-acid chain; its full sequence is Lipoyl amidotransferase LIPT1, mitochondrial (373 aa).

The transit peptide at 1–25 directs the protein to the mitochondrion; sequence MLIPFSMKNCFQLLCNLKVPAAGFK. The BPL/LPL catalytic domain maps to 57 to 243; sequence LEGKPVLFLW…EYATSHQIDN (187 aa). Y107, R151, K161, T179, T208, and A210 together coordinate (R)-lipoyl-5'-AMP.

Belongs to the LplA family.

The protein localises to the mitochondrion. The enzyme catalyses N(6)-[(R)-lipoyl]-L-lysyl-[glycine-cleavage complex H protein] + L-lysyl-[lipoyl-carrier protein] = L-lysyl-[glycine-cleavage complex H protein] + N(6)-[(R)-lipoyl]-L-lysyl-[lipoyl-carrier protein]. It catalyses the reaction (R)-lipoyl-5'-AMP + L-lysyl-[lipoyl-carrier protein] = N(6)-[(R)-lipoyl]-L-lysyl-[lipoyl-carrier protein] + AMP + 2 H(+). Its pathway is protein modification; protein lipoylation via exogenous pathway; protein N(6)-(lipoyl)lysine from lipoate: step 2/2. Its activity is regulated as follows. Inhibited by lipoyl-AMP analogs including hexanoyl-, octanoyl- and decanoyl-AMP. Its function is as follows. Lipoyl amidotransferase that catalyzes the transfer of lipoyl moieties from lipoyl-protein H of the glycine cleavage system (lipoyl-GCSH) to E2 subunits of the pyruvate dehydrogenase complex (PDCE2). Unable to catalyze the transfer of octanoyl from octanoyl-GCSH to PDCE2. In vitro, it is also able to catalyze the transfer of the lipoyl group from lipoyl-AMP to the specific lysine residue of lipoyl domains of lipoate-dependent enzymes but this reaction may not be physiologically relevant. This Bos taurus (Bovine) protein is Lipoyl amidotransferase LIPT1, mitochondrial (LIPT1).